The sequence spans 197 residues: GTP cyclohydrolase 1 (197 aa).

Zn(2+) contacts are provided by Cys-85, His-88, and Cys-156.

This sequence belongs to the GTP cyclohydrolase I family. Toroid-shaped homodecamer, composed of two pentamers of five dimers.

The enzyme catalyses GTP + H2O = 7,8-dihydroneopterin 3'-triphosphate + formate + H(+). Its pathway is cofactor biosynthesis; 7,8-dihydroneopterin triphosphate biosynthesis; 7,8-dihydroneopterin triphosphate from GTP: step 1/1. This Mesorhizobium japonicum (strain LMG 29417 / CECT 9101 / MAFF 303099) (Mesorhizobium loti (strain MAFF 303099)) protein is GTP cyclohydrolase 1.